A 512-amino-acid polypeptide reads, in one-letter code: Mesoderm induction early response protein 1 (512 aa).

Positions 1-16 (MAEPSVESSSPGGSAT) are enriched in low complexity. 2 disordered regions span residues 1–63 (MAEP…REGD) and 75–173 (YGST…EDYI). Position 10 is a phosphoserine (serine 10). Over residues 17 to 36 (SDDHEFDPSADMLVHDFDDE) the composition is skewed to basic and acidic residues. Acidic residues-rich tracts occupy residues 37 to 46 (RTLEEEEMME) and 83 to 105 (EEDE…DNDD). Residues 129–144 (QSSNDDPSQSVASQDA) show a composition bias toward polar residues. Residue serine 141 is modified to Phosphoserine. Residue tyrosine 155 is modified to Phosphotyrosine. A phosphoserine mark is found at serine 160 and serine 166. Acidic residues predominate over residues 160-173 (SEVEEESEEDEDYI). The ELM2 domain maps to 180-278 (KEIMVGSMFQ…EALRRLRFNV (99 aa)). An interaction with HDAC1 region spans residues 180–284 (KEIMVGSMFQ…RFNVKAAREE (105 aa)). Lysine 239 is covalently cross-linked (Glycyl lysine isopeptide (Lys-Gly) (interchain with G-Cter in SUMO2)). Residues 283–335 (EELSVWTEEECRNFEQGLKAYGKDFHLIQANKVRTRSVGECVAFYYMWKKSER) enclose the SANT domain. Positions 366–512 (ESESAASSRA…KFEELENTDD (147 aa)) are disordered. Phosphoserine is present on residues serine 367, serine 369, and serine 377. A compositionally biased stretch (polar residues) spans 396–409 (TVSTANQNGVSSNG). A compositionally biased stretch (basic and acidic residues) spans 414–423 (LNKEEVKVEG). Residue lysine 420 forms a Glycyl lysine isopeptide (Lys-Gly) (interchain with G-Cter in SUMO2) linkage. Threonine 448 is modified (phosphothreonine). The segment covering 462-475 (ARNENDFDEKSERP) has biased composition (basic and acidic residues). Polar residues predominate over residues 482–494 (NSNGKESPGSSEF). A phosphoserine mark is found at serine 483, serine 488, and serine 491.

Interacts with HDAC1. Part of a complex containing at least CDYL, MIER1, MIER2, HDAC1 and HDAC2. As to expression, ubiquitously expressed, but at very low levels. However, consistent level of expression are observed in heart, testis, thyroid, ovary and adrenal gland. Transcripts are up-regulated in breast carcinoma cell lines and tumor.

The protein resides in the nucleus. Its subcellular location is the cytoplasm. In terms of biological role, transcriptional repressor regulating the expression of a number of genes including SP1 target genes. Probably functions through recruitment of HDAC1 a histone deacetylase involved in chromatin silencing. In Homo sapiens (Human), this protein is Mesoderm induction early response protein 1 (MIER1).